The following is a 237-amino-acid chain: MGNSVMEKIKGGLVVSCQALEDEPLHSAFIMSKMALAAVQGGAVGIRANTAKDIRAIQSEIDVPIIGIYKKDYDDSDVFITPTLKEVREICETGVEIVAMDATTRKRPHNEDLKDILSAIRKEFPNTLFMADTASIEDVYYADSLGFDLIGTTLYGYTEETANKNISDDDFSHLKEVLKSTKRPVIAEGKIDSPSKARQVLTLGCYAVVVGGAVTRPQEITTRFTNEIQKIQEERGK.

Belongs to the NanE family.

The enzyme catalyses an N-acyl-D-glucosamine 6-phosphate = an N-acyl-D-mannosamine 6-phosphate. Its pathway is amino-sugar metabolism; N-acetylneuraminate degradation; D-fructose 6-phosphate from N-acetylneuraminate: step 3/5. In terms of biological role, converts N-acetylmannosamine-6-phosphate (ManNAc-6-P) to N-acetylglucosamine-6-phosphate (GlcNAc-6-P). The chain is Putative N-acetylmannosamine-6-phosphate 2-epimerase from Listeria monocytogenes serovar 1/2a (strain ATCC BAA-679 / EGD-e).